A 151-amino-acid polypeptide reads, in one-letter code: Methylglyoxal synthase (151 aa).

The 146-residue stretch at 6–151 (RVMPAHKHIA…DYDAYLAERV (146 aa)) folds into the MGS-like domain. Residues H19, K23, 45 to 48 (TGTT), and 65 to 66 (SG) contribute to the substrate site. The active-site Proton donor/acceptor is the D71. Residue H98 participates in substrate binding.

Belongs to the methylglyoxal synthase family.

It catalyses the reaction dihydroxyacetone phosphate = methylglyoxal + phosphate. In terms of biological role, catalyzes the formation of methylglyoxal from dihydroxyacetone phosphate. In Aliivibrio fischeri (strain MJ11) (Vibrio fischeri), this protein is Methylglyoxal synthase.